A 355-amino-acid polypeptide reads, in one-letter code: Meiotic coiled-coil protein 4 (355 aa).

Positions 298 to 338 (QRLSRTEINKEIIEIEKLELEVVQFQMSIANLINTQVEVTN) form a coiled coil.

The protein resides in the cytoplasm. Its function is as follows. Has a role in meiosis. The sequence is that of Meiotic coiled-coil protein 4 (mcp4) from Schizosaccharomyces pombe (strain 972 / ATCC 24843) (Fission yeast).